Reading from the N-terminus, the 342-residue chain is Paired box protein Pax-9 (342 aa).

Residues 4–130 (AFGEVNQLGG…SSISRILRNK (127 aa)) constitute a DNA-binding region (paired). The tract at residues 7–63 (EVNQLGGVFVNGRPLPNAIRLRIVELAQLGIRPCDISRQLRVSHGCVSKILARYNET) is PAI subdomain. Residues 82 to 130 (TVVKHIRTYKQRDPGIFAWEIRDRLLADGVCDKYNVPSVSSISRILRNK) are RED subdomain. Positions 168 to 189 (AAAAKVPTPPGVPAIPGSVALP) are interaction with KDM5B.

Interacts with KDM5B.

Its subcellular location is the nucleus. Transcription factor required for normal development of thymus, parathyroid glands, ultimobranchial bodies, teeth, skeletal elements of skull and larynx as well as distal limbs. This is Paired box protein Pax-9 from Rattus norvegicus (Rat).